We begin with the raw amino-acid sequence, 436 residues long: GTPase Der (436 aa).

EngA-type G domains lie at 4–167 and 175–351; these read PTVA…PTEA and IKFS…QSQN. GTP-binding positions include 10 to 17, 57 to 61, 119 to 122, 181 to 188, 229 to 233, and 294 to 297; these read GRPNVGKS, DTGGI, NKVD, DTAGM, and NKWD. A KH-like domain is found at 352–436; that stretch reads TRIPSAVLND…PIRLIARKRK (85 aa).

It belongs to the TRAFAC class TrmE-Era-EngA-EngB-Septin-like GTPase superfamily. EngA (Der) GTPase family. Associates with the 50S ribosomal subunit.

In terms of biological role, GTPase that plays an essential role in the late steps of ribosome biogenesis. The polypeptide is GTPase Der (Streptococcus mutans serotype c (strain ATCC 700610 / UA159)).